The following is a 103-amino-acid chain: Large ribosomal subunit protein bL21 (103 aa).

This sequence belongs to the bacterial ribosomal protein bL21 family. Part of the 50S ribosomal subunit. Contacts protein L20.

Functionally, this protein binds to 23S rRNA in the presence of protein L20. The protein is Large ribosomal subunit protein bL21 of Vibrio atlanticus (strain LGP32) (Vibrio splendidus (strain Mel32)).